The primary structure comprises 261 residues: Ribosomal RNA small subunit methyltransferase J (261 aa).

Residues 111-112, 127-128, 163-164, and D181 each bind S-adenosyl-L-methionine; these read RD, ER, and SS.

The protein belongs to the methyltransferase superfamily. RsmJ family.

The protein localises to the cytoplasm. It carries out the reaction guanosine(1516) in 16S rRNA + S-adenosyl-L-methionine = N(2)-methylguanosine(1516) in 16S rRNA + S-adenosyl-L-homocysteine + H(+). In terms of biological role, specifically methylates the guanosine in position 1516 of 16S rRNA. This is Ribosomal RNA small subunit methyltransferase J from Shewanella sp. (strain ANA-3).